Reading from the N-terminus, the 668-residue chain is Probable syringafactin export ATP-binding/permease protein SyfD (668 aa).

One can recognise an ABC transporter domain in the interval 22 to 260; that stretch reads LRLQQVSRSF…APEAQPATPP (239 aa). 58–65 serves as a coordination point for ATP; sequence GASGSGKS. The segment at 242-263 is disordered; the sequence is RRTAQTTQPAPEAQPATPPGPA. Residues 245–256 show a composition bias toward low complexity; it reads AQTTQPAPEAQP. The next 5 membrane-spanning stretches (helical) occupy residues 267 to 287, 293 to 313, 541 to 561, 602 to 622, and 631 to 651; these read LLAS…ALIS, LLTM…SAIG, LTLL…IGVM, MGGV…TLFV, and LASV…FGFV.

It belongs to the ABC transporter superfamily. Macrolide exporter (TC 3.A.1.122) family. As to quaternary structure, probably part of a tripartite efflux system, which is composed of an inner membrane transporter, a periplasmic membrane fusion protein, and an outer membrane component.

Its subcellular location is the cell inner membrane. In terms of biological role, probably involved in the export of syringafactins. The protein is Probable syringafactin export ATP-binding/permease protein SyfD of Pseudomonas syringae pv. tomato (strain ATCC BAA-871 / DC3000).